Here is a 372-residue protein sequence, read N- to C-terminus: D-alanine--D-alanine ligase (372 aa).

One can recognise an ATP-grasp domain in the interval 145–349 (KTVLRAGGIP…CPNLLDQLIE (205 aa)). ATP is bound at residue 176-231 (DRWGTSELFVKAVSLGSSVATLPVKTETEFTKAVKEVFRYDDRLMVEPRIRGREIE). Positions 303, 316, and 318 each coordinate Mg(2+).

Belongs to the D-alanine--D-alanine ligase family. The cofactor is Mg(2+). It depends on Mn(2+) as a cofactor.

Its subcellular location is the cytoplasm. The enzyme catalyses 2 D-alanine + ATP = D-alanyl-D-alanine + ADP + phosphate + H(+). It participates in cell wall biogenesis; peptidoglycan biosynthesis. Cell wall formation. The chain is D-alanine--D-alanine ligase from Coxiella burnetii (strain RSA 331 / Henzerling II).